The chain runs to 317 residues: MPVQGSQRRLLGSLNSTPTATPRLGLAANQTGARCLEVSIPDGLFLSLGLVSLVENVLVVVAIARNRNLHSPMYCFICCLALSDLLVSGSNMLETAVFLLLEAGALAARAAVVQQLDNVIDVITCSSMLSSLCFLGAIAVDRYISIFYALRYHSIVTLRRARRVVAAIWVASVLFSTLFIAYCDHAAVLLCLVVFFLAMLVLMAVLYVHMLARACQHAQGIAQLHKRQRPAHQGVGLKGAATLTILLGIFFLCWGPFFLHLTLIVLCPQHPTCSCIFKNFNLFLTLIICNAIIDPLIYAFRSQELRRTLKKVLLCSW.

The Extracellular portion of the chain corresponds to 1–37 (MPVQGSQRRLLGSLNSTPTATPRLGLAANQTGARCLE). N29 carries an N-linked (GlcNAc...) asparagine glycan. A helical transmembrane segment spans residues 38-63 (VSIPDGLFLSLGLVSLVENVLVVVAI). Residues 64-72 (ARNRNLHSP) are Cytoplasmic-facing. The helical transmembrane segment at 73 to 93 (MYCFICCLALSDLLVSGSNML) threads the bilayer. Residues 94–118 (ETAVFLLLEAGALAARAAVVQQLDN) are Extracellular-facing. A helical membrane pass occupies residues 119 to 140 (VIDVITCSSMLSSLCFLGAIAV). At 141-163 (DRYISIFYALRYHSIVTLRRARR) the chain is on the cytoplasmic side. A helical membrane pass occupies residues 164-183 (VVAAIWVASVLFSTLFIAYC). The Extracellular portion of the chain corresponds to 184–191 (DHAAVLLC). The chain crosses the membrane as a helical span at residues 192–211 (LVVFFLAMLVLMAVLYVHML). The Cytoplasmic segment spans residues 212–240 (ARACQHAQGIAQLHKRQRPAHQGVGLKGA). The helical transmembrane segment at 241-266 (ATLTILLGIFFLCWGPFFLHLTLIVL) threads the bilayer. Residues 267–279 (CPQHPTCSCIFKN) lie on the Extracellular side of the membrane. Residues 280–300 (FNLFLTLIICNAIIDPLIYAF) traverse the membrane as a helical segment. Residues 301–317 (RSQELRRTLKKVLLCSW) lie on the Cytoplasmic side of the membrane. C315 carries S-palmitoyl cysteine lipidation.

Belongs to the G-protein coupled receptor 1 family. Interacts with MGRN1, but does not undergo MGRN1-mediated ubiquitination; this interaction competes with GNAS-binding and thus inhibits agonist-induced cAMP production. Interacts with OPN3; the interaction results in a decrease in MC1R-mediated cAMP signaling and ultimately a decrease in melanin production in melanocytes.

The protein resides in the cell membrane. Receptor for MSH (alpha, beta and gamma) and ACTH. The activity of this receptor is mediated by G proteins which activate adenylate cyclase. Mediates melanogenesis, the production of eumelanin (black/brown) and phaeomelanin (red/yellow), via regulation of cAMP signaling in melanocytes. The chain is Melanocyte-stimulating hormone receptor (MC1R) from Trachypithecus obscurus (Dusky leaf-monkey).